Reading from the N-terminus, the 77-residue chain is Large ribosomal subunit protein uL24 (77 aa).

The protein belongs to the universal ribosomal protein uL24 family. In terms of assembly, part of the 50S ribosomal subunit.

One of two assembly initiator proteins, it binds directly to the 5'-end of the 23S rRNA, where it nucleates assembly of the 50S subunit. Its function is as follows. One of the proteins that surrounds the polypeptide exit tunnel on the outside of the subunit. The chain is Large ribosomal subunit protein uL24 from Campylobacter jejuni subsp. doylei (strain ATCC BAA-1458 / RM4099 / 269.97).